Consider the following 251-residue polypeptide: Flap endonuclease Xni (251 aa).

Residue Asp-104 coordinates Mg(2+). A 5'-3' exonuclease domain is found at 160 to 249; that stretch reads VQPQQLPDYW…IDGNLQQLRL (90 aa). The K(+) site is built by Leu-171, Ala-172, Pro-180, Val-182, and Ile-185. Residues 184–189 are interaction with DNA; that stretch reads GIGPKS.

Belongs to the Xni family. The cofactor is Mg(2+). K(+) serves as cofactor.

Has flap endonuclease activity. During DNA replication, flap endonucleases cleave the 5'-overhanging flap structure that is generated by displacement synthesis when DNA polymerase encounters the 5'-end of a downstream Okazaki fragment. This Escherichia coli O45:K1 (strain S88 / ExPEC) protein is Flap endonuclease Xni.